The following is a 428-amino-acid chain: Adenylosuccinate synthetase (428 aa).

Residues 12–18 (GDEGKGK) and 40–42 (GHT) contribute to the GTP site. The active-site Proton acceptor is Asp13. Mg(2+)-binding residues include Asp13 and Gly40. Residues 13-16 (DEGK), 38-41 (NAGH), Thr130, Arg144, Gln225, Thr240, and Arg304 each bind IMP. His41 serves as the catalytic Proton donor. Residue 300-306 (VTTGRAR) coordinates substrate. GTP contacts are provided by residues Arg306, 332 to 334 (KID), and 414 to 416 (SVG).

Belongs to the adenylosuccinate synthetase family. Homodimer. Requires Mg(2+) as cofactor.

The protein localises to the cytoplasm. It catalyses the reaction IMP + L-aspartate + GTP = N(6)-(1,2-dicarboxyethyl)-AMP + GDP + phosphate + 2 H(+). It participates in purine metabolism; AMP biosynthesis via de novo pathway; AMP from IMP: step 1/2. Functionally, plays an important role in the de novo pathway of purine nucleotide biosynthesis. Catalyzes the first committed step in the biosynthesis of AMP from IMP. This is Adenylosuccinate synthetase from Clostridium botulinum (strain Loch Maree / Type A3).